The following is a 326-amino-acid chain: Protein farnesyltransferase/geranylgeranyltransferase type-1 subunit alpha (326 aa).

PFTA repeat units follow at residues 55–89 (RSPR…ALNH), 90–124 (DLFE…KLGP), 126–160 (VAGR…ALGG), 161–194 (WEDE…QSPL), and 201–235 (MRES…DDKE).

The protein belongs to the protein prenyltransferase subunit alpha family. Heterodimer of an alpha and a beta subunit. Requires Mg(2+) as cofactor.

The enzyme catalyses L-cysteinyl-[protein] + (2E,6E)-farnesyl diphosphate = S-(2E,6E)-farnesyl-L-cysteinyl-[protein] + diphosphate. It catalyses the reaction geranylgeranyl diphosphate + L-cysteinyl-[protein] = S-geranylgeranyl-L-cysteinyl-[protein] + diphosphate. Essential subunit of both the farnesyltransferase and the geranylgeranyltransferase complex. Contributes to the transfer of a farnesyl or geranylgeranyl moiety from farnesyl or geranylgeranyl diphosphate to a cysteine at the fourth position from the C-terminus of several proteins having the C-terminal sequence Cys-aliphatic-aliphatic-X. In Arabidopsis thaliana (Mouse-ear cress), this protein is Protein farnesyltransferase/geranylgeranyltransferase type-1 subunit alpha (FTA).